Consider the following 261-residue polypeptide: Thiamine thiazole synthase (261 aa).

NAD(+) contacts are provided by residues S33, 52–53 (ER), G60, V124, and 152–154 (HVD). Fe cation-binding residues include D154 and H169. NAD(+) is bound at residue M219. R229 provides a ligand contact to glycine.

It belongs to the THI4 family. Homooctamer; tetramer of dimers. It depends on Fe(2+) as a cofactor.

It carries out the reaction hydrogen sulfide + glycine + NAD(+) = ADP-5-ethyl-4-methylthiazole-2-carboxylate + nicotinamide + 3 H2O + H(+). It functions in the pathway cofactor biosynthesis; thiamine diphosphate biosynthesis. Functionally, involved in the biosynthesis of the thiazole moiety of thiamine. Catalyzes the conversion of NAD and glycine to adenosine diphosphate 5-(2-hydroxyethyl)-4-methylthiazole-2-carboxylate (ADT), an adenylated thiazole intermediate, using free sulfide as a source of sulfur. This Pyrobaculum arsenaticum (strain DSM 13514 / JCM 11321 / PZ6) protein is Thiamine thiazole synthase.